A 173-amino-acid chain; its full sequence is Large ribosomal subunit protein uL10 (173 aa).

This sequence belongs to the universal ribosomal protein uL10 family. In terms of assembly, part of the ribosomal stalk of the 50S ribosomal subunit. The N-terminus interacts with L11 and the large rRNA to form the base of the stalk. The C-terminus forms an elongated spine to which L12 dimers bind in a sequential fashion forming a multimeric L10(L12)X complex.

Functionally, forms part of the ribosomal stalk, playing a central role in the interaction of the ribosome with GTP-bound translation factors. This chain is Large ribosomal subunit protein uL10, found in Chlorobium phaeobacteroides (strain BS1).